Consider the following 520-residue polypeptide: Cytochrome P450 monooxygenase TRI4 (520 aa).

A helical membrane pass occupies residues 10-30 (LVNIPISHAVGVVAASTVIYF). An N-linked (GlcNAc...) asparagine glycan is attached at Asn447. Cys455 lines the heme pocket.

The protein belongs to the cytochrome P450 family. Requires heme as cofactor.

The protein resides in the membrane. It participates in sesquiterpene biosynthesis; trichothecene biosynthesis. Cytochrome P450 monooxygenase; part of the core gene cluster that mediates the biosynthesis of trichothecenes, a very large family of chemically related bicyclic sesquiterpene compounds acting as mycotoxins, including T2-toxin. The biosynthesis of trichothecenes begins with the cyclization of farnesyl diphosphate to trichodiene and is catalyzed by the trichodiene synthase TRI5. Trichodiene undergoes a series of oxygenations catalyzed by the cytochrome P450 monooxygenase TRI4. TRI4 controls the addition of four oxygens at C-2, C-3, C-11, and the C-12, C-13-epoxide to form the intermediate isotrichotriol. Isotrichotriol then undergoes a non-enzymatic isomerization and cyclization to form isotrichodermol. During this process, the oxygen at the C-2 position becomes the pyran ring oxygen and the hydroxyl group at C-11 is lost. More complex type A trichothecenes are built by modifying isotrichodermol through a series of paired hydroxylation and acetylation or acylation steps. Isotrichodermol is converted to isotrichodermin by the acetyltransferase TRI101. TRI101 encodes a C-3 transacetylase that acts as a self-protection or resistance factor during biosynthesis and that the presence of a free C-3 hydroxyl group is a key component of Fusarium trichothecene phytotoxicity. A second hydroxyl group is added to C-15 by the trichothecene C-15 hydroxylase TRI11, producing 15-decalonectrin, which is then acetylated by TRI3, producing calonectrin. A third hydroxyl group is added at C-4 by the cytochrome P450 monooxygenase TRI13, converting calonectrin to 3,15-diacetoxyspirpenol, which is subsequently acetylated by the acetyltransferase TRI7. A fourth hydroxyl group is added to C-8 by the cytochrome P450 monooxygenase TRI1, followed by the addition of an isovaleryl moiety by TRI16. Finally, the acetyl group is removed from the C-3 position by the trichothecene C-3 esterase TRI8 to produce T-2 toxin. The protein is Cytochrome P450 monooxygenase TRI4 of Fusarium sporotrichioides.